A 144-amino-acid chain; its full sequence is Large ribosomal subunit protein uL16 (144 aa).

Basic residues predominate over residues 1–16 (MLVPKRVKHRKVQRGH). Residues 1–20 (MLVPKRVKHRKVQRGHMRGE) are disordered.

Belongs to the universal ribosomal protein uL16 family. Part of the 50S ribosomal subunit.

In terms of biological role, binds 23S rRNA and is also seen to make contacts with the A and possibly P site tRNAs. The chain is Large ribosomal subunit protein uL16 from Limosilactobacillus reuteri (strain DSM 20016) (Lactobacillus reuteri).